A 498-amino-acid chain; its full sequence is Osteoclast stimulatory transmembrane protein (498 aa).

Residues 1–51 (MRTIRAATEHLFGLGWKFWRLGICKAVVPLQAAWKAFSQPVPASCNELLTQ) lie on the Cytoplasmic side of the membrane. A helical membrane pass occupies residues 52–72 (LLLCVSLASLIAGLAHHWLVS). The Extracellular portion of the chain corresponds to 73–81 (LQLYPLGPP). A helical transmembrane segment spans residues 82 to 102 (ALVTSLCGLFVFLSLGLVPPI). The Cytoplasmic segment spans residues 103–121 (RCLFVLSVPTLGSKQGRRL). A helical transmembrane segment spans residues 122–142 (LLSYSAANLAVAVVPNVLGNV). The Extracellular portion of the chain corresponds to 143–226 (RAAGQVLSCV…LARAALGTQR (84 aa)). The chain crosses the membrane as a helical span at residues 227-247 (VVTGLFLLGLLGESAWYLHRY). Over 248–303 (LTDLRFDNIYATRQLVRQLAQAGATHLLTSPPPWLLQTAQPKLSREELLSCLLRLG) the chain is Cytoplasmic. Residues 304–324 (LLALLLVATAVTVASDYGAFL) traverse the membrane as a helical segment. At 325–401 (LAQAAVAWAQ…QAQPPRVTAA (77 aa)) the chain is on the extracellular side. Residues 402–422 (LAAGALQLLAGATLVLQAYAW) form a helical membrane-spanning segment. Topologically, residues 423 to 498 (RLRHTIAASF…DSLGPPYDLE (76 aa)) are cytoplasmic. Residues 449-498 (QRRHNQSDHLNKQPGTMATRESRKPGQGTRTLESQGPQAHDSLGPPYDLE) are disordered. The segment covering 476-485 (GTRTLESQGP) has biased composition (polar residues).

As to expression, expressed in osteoclast (at protein level). Ubiquitous. Highly expressed in multi-nuclear osteoclast cells compared to mono-nuclear macrophages. Expressed in foreign body giant cells (FBGCs).

It is found in the membrane. Functionally, probable cell surface receptor that plays a role in cellular fusion and cell differentiation. Cooperates with DCSTAMP in modulating cell-cell fusion in both osteoclasts and foreign body giant cells (FBGCs). Involved in osteoclast bone resorption. Promotes osteoclast differentiation and may play a role in the multinucleated osteoclast maturation. This Mus musculus (Mouse) protein is Osteoclast stimulatory transmembrane protein (Ocstamp).